The sequence spans 75 residues: Protein TM_1420 (75 aa).

[2Fe-2S] cluster contacts are provided by Cys6, Cys11, Cys39, and Cys43.

[2Fe-2S] cluster serves as cofactor.

Its function is as follows. Might be part of a multi-protein complex, possibly involved in metal cluster assembly. The chain is Protein TM_1420 from Thermotoga maritima (strain ATCC 43589 / DSM 3109 / JCM 10099 / NBRC 100826 / MSB8).